The following is a 95-amino-acid chain: Large ribosomal subunit protein uL23 (95 aa).

It belongs to the universal ribosomal protein uL23 family. In terms of assembly, part of the 50S ribosomal subunit. Contacts protein L29, and trigger factor when it is bound to the ribosome.

One of the early assembly proteins it binds 23S rRNA. One of the proteins that surrounds the polypeptide exit tunnel on the outside of the ribosome. Forms the main docking site for trigger factor binding to the ribosome. This chain is Large ribosomal subunit protein uL23, found in Bacillus licheniformis (strain ATCC 14580 / DSM 13 / JCM 2505 / CCUG 7422 / NBRC 12200 / NCIMB 9375 / NCTC 10341 / NRRL NRS-1264 / Gibson 46).